Consider the following 360-residue polypeptide: MLVWLAEHLVKYYSGFNVFSYLTFRAIVSLLTALFLSLWMGPRVIKRLQEMSFGQVVRNDGPESHFSKRGTPTMGGIMILTSITVSVLMWAYPSNPYVWCVLFVLVGYGIVGFVDDYRKVVRKDTKGLIARWKYFWQSVIALVVAFAMYAVGKDTPATELVVPFFKDIMPQLGLLYVLLAYFVIVGTSNAVNLTDGLDGLAIMPTVFVAAGFALVAWATGNMNFANYLHIPYLRHAGELVIVCTAIVGAGLGFLWFNTYPAQVFMGDVGSLALGGALGTIAVLLRQEFLLLIMGGVFVVETLSVILQVGSFKLRGQRIFRMAPIHHHYELKGWPEPRVIVRFWIISLMLVLIGLATLKVR.

A run of 10 helical transmembrane segments spans residues 18–38, 72–92, 94–114, 132–152, 168–188, 199–219, 236–256, 263–283, 288–308, and 338–358; these read VFSYLTFRAIVSLLTALFLSL, PTMGGIMILTSITVSVLMWAY, SNPYVWCVLFVLVGYGIVGFV, WKYFWQSVIALVVAFAMYAVG, IMPQLGLLYVLLAYFVIVGTS, GLAIMPTVFVAAGFALVAWAT, AGELVIVCTAIVGAGLGFLWF, VFMGDVGSLALGGALGTIAVL, FLLLIMGGVFVVETLSVILQV, and VIVRFWIISLMLVLIGLATLK.

This sequence belongs to the glycosyltransferase 4 family. MraY subfamily. Mg(2+) is required as a cofactor.

Its subcellular location is the cell inner membrane. It carries out the reaction UDP-N-acetyl-alpha-D-muramoyl-L-alanyl-gamma-D-glutamyl-meso-2,6-diaminopimeloyl-D-alanyl-D-alanine + di-trans,octa-cis-undecaprenyl phosphate = di-trans,octa-cis-undecaprenyl diphospho-N-acetyl-alpha-D-muramoyl-L-alanyl-D-glutamyl-meso-2,6-diaminopimeloyl-D-alanyl-D-alanine + UMP. Its pathway is cell wall biogenesis; peptidoglycan biosynthesis. Its function is as follows. Catalyzes the initial step of the lipid cycle reactions in the biosynthesis of the cell wall peptidoglycan: transfers peptidoglycan precursor phospho-MurNAc-pentapeptide from UDP-MurNAc-pentapeptide onto the lipid carrier undecaprenyl phosphate, yielding undecaprenyl-pyrophosphoryl-MurNAc-pentapeptide, known as lipid I. In Serratia proteamaculans (strain 568), this protein is Phospho-N-acetylmuramoyl-pentapeptide-transferase.